Here is a 688-residue protein sequence, read N- to C-terminus: NADH-ubiquinone oxidoreductase 75 kDa subunit (688 aa).

A 2Fe-2S ferredoxin-type domain is found at 1-85 (MLIRFKINEI…DESIETEIDE (85 aa)). Residues cysteine 38, cysteine 49, cysteine 52, and cysteine 66 each coordinate [2Fe-2S] cluster. One can recognise a 4Fe-4S His(Cys)3-ligated-type domain in the interval 85–124 (EILKAREGVMEFLLINHPLDCPICDQGGECDLQEQTIAYG). The [4Fe-4S] cluster site is built by histidine 101, cysteine 105, cysteine 108, cysteine 114, cysteine 153, cysteine 156, cysteine 159, and cysteine 204. The region spanning 223 to 279 (LKNIKGIDIFDTVLTPINYQVKGGEIFRILPRINDRLNEEWITDKVRFHYESYKIIE) is the 4Fe-4S Mo/W bis-MGD-type domain.

Belongs to the complex I 75 kDa subunit family. As to quaternary structure, complex I is composed of about 45 different subunits. It depends on [2Fe-2S] cluster as a cofactor. The cofactor is [4Fe-4S] cluster.

The protein localises to the mitochondrion inner membrane. The catalysed reaction is a ubiquinone + NADH + 5 H(+)(in) = a ubiquinol + NAD(+) + 4 H(+)(out). Functionally, core subunit of the mitochondrial membrane respiratory chain NADH dehydrogenase (Complex I) that is believed to belong to the minimal assembly required for catalysis. Complex I functions in the transfer of electrons from NADH to the respiratory chain. The immediate electron acceptor for the enzyme is believed to be ubiquinone. This is the largest subunit of complex I and it is a component of the iron-sulfur (IP) fragment of the enzyme. It may form part of the active site crevice where NADH is oxidized. This is NADH-ubiquinone oxidoreductase 75 kDa subunit (nad11) from Dictyostelium citrinum (Slime mold).